The chain runs to 104 residues: Small ribosomal subunit protein bS16 (104 aa).

Belongs to the bacterial ribosomal protein bS16 family.

This chain is Small ribosomal subunit protein bS16, found in Wolbachia pipientis subsp. Culex pipiens (strain wPip).